The sequence spans 551 residues: Frizzled-2 (551 aa).

Positions 1-26 (MQGVTRASILLIIYHLFTLSLGQLHG) are cleaved as a signal peptide. At 27–231 (EKGISVPEHG…FSQDEIRFAR (205 aa)) the chain is on the extracellular side. The 120-residue stretch at 33 to 152 (PEHGFCQPIS…HGAEQICVGQ (120 aa)) folds into the FZ domain. Disulfide bonds link cysteine 38–cysteine 99, cysteine 46–cysteine 92, cysteine 83–cysteine 120, cysteine 109–cysteine 149, and cysteine 113–cysteine 137. N-linked (GlcNAc...) asparagine glycosylation occurs at asparagine 52. The N-linked (GlcNAc...) asparagine glycan is linked to asparagine 153. The helical transmembrane segment at 232 to 252 (IWILIWSVLCCASTFITVTTY) threads the bilayer. Over 253-265 (LVDMQRFRYPERP) the chain is Cytoplasmic. The helical transmembrane segment at 266–286 (IIFLSGCYTMVSVAYIAGFVL) threads the bilayer. Topologically, residues 287–313 (GDKVVCNEGFSEDGYKTVVQGTKKEGC) are extracellular. The chain crosses the membrane as a helical span at residues 314 to 334 (TILFMMLYFFSMASSIWWVIL). Residues 335 to 356 (SLTWFLAAGMKWGHEAIEANSQ) lie on the Cytoplasmic side of the membrane. The chain crosses the membrane as a helical span at residues 357–377 (YFHLAAWAVPAVKTITILAMG). Over 378-400 (QIDGDLLSGVCFVGLNNIDPLRG) the chain is Extracellular. The helical transmembrane segment at 401–421 (FVLAPLFVYLFIGTSFLLAGF) threads the bilayer. Residues 422 to 447 (VSLFRIRTIMKHDGTKTEKLERLMVR) lie on the Cytoplasmic side of the membrane. The chain crosses the membrane as a helical span at residues 448–468 (IGVFSVLYTVPATIVIACYFY). At 469-505 (EQAFREHWERSWVSQNCKSLAIPCPLQYTPRMTPDFT) the chain is on the extracellular side. Residues 506–526 (VYMIKYLMTLIVGITSGFWIW) form a helical membrane-spanning segment. Residues 527–534 (SGKTLHSW) are Cytoplasmic-facing. The Lys-Thr-X-X-X-Trp motif, mediates interaction with the PDZ domain of Dvl family members motif lies at 529–534 (KTLHSW). The short motif at 549-551 (TTV) is the PDZ-binding element.

The protein belongs to the G-protein coupled receptor Fz/Smo family. In terms of tissue distribution, widely expressed, especially in the eye anlage, otic vesicle and developing somites.

It localises to the membrane. The protein resides in the cell membrane. Receptor for Wnt proteins. Most of frizzled receptors are coupled to the beta-catenin canonical signaling pathway, which leads to the activation of disheveled proteins, inhibition of GSK-3 kinase, nuclear accumulation of beta-catenin and activation of Wnt target genes. A second signaling pathway involving PKC and calcium fluxes has been seen for some family members, but it is not yet clear if it represents a distinct pathway or if it can be integrated in the canonical pathway, as PKC seems to be required for Wnt-mediated inactivation of GSK-3 kinase. Both pathways seem to involve interactions with G-proteins. May be involved in transduction and intercellular transmission of polarity information during tissue morphogenesis and/or in differentiated tissues. This is Frizzled-2 (fzd2) from Xenopus laevis (African clawed frog).